The following is a 78-amino-acid chain: Putative membrane protein insertion efficiency factor (78 aa).

Belongs to the UPF0161 family.

It is found in the cell membrane. Its function is as follows. Could be involved in insertion of integral membrane proteins into the membrane. The sequence is that of Putative membrane protein insertion efficiency factor from Bacillus anthracis (strain A0248).